The primary structure comprises 165 residues: Transcriptional repressor NrdR (165 aa).

Residues 3–34 (CPFCGAQDTRVVDSRLSHEGDQVRRRRECGEC) fold into a zinc finger. Residues 49–139 (PRVVKSDGSR…VYRRFEDVNQ (91 aa)) form the ATP-cone domain.

It belongs to the NrdR family. It depends on Zn(2+) as a cofactor.

Its function is as follows. Negatively regulates transcription of bacterial ribonucleotide reductase nrd genes and operons by binding to NrdR-boxes. This is Transcriptional repressor NrdR from Methylococcus capsulatus (strain ATCC 33009 / NCIMB 11132 / Bath).